Reading from the N-terminus, the 354-residue chain is 3'-5' exonuclease (354 aa).

The disordered stretch occupies residues 1 to 120; sequence MEKYLIKMPI…PSPEKEKPEK (120 aa). A compositionally biased stretch (basic and acidic residues) spans 36–50; that stretch reads TKKDTPKELKDKENA. Basic residues predominate over residues 59 to 70; sequence TKGRPGRPAVKR. Positions 71–91 are enriched in basic and acidic residues; that stretch reads KNLDNPDAKAEKKATEEENPP. Ser-104, Ser-110, and Ser-112 each carry phosphoserine. The 3'-5' exonuclease domain maps to 146–314; it reads VLQWVEKQKD…GQVIYRELER (169 aa). Residues Asp-163, Glu-165, and Asp-301 each contribute to the Mg(2+) site.

Belongs to the WRNexo family.

The protein localises to the nucleus. Functionally, has exonuclease activity on both single-stranded and duplex templates bearing overhangs, but not blunt ended duplex DNA, and cleaves in a 3'-5' direction. Essential for the formation of DNA replication focal centers. Has an important role in maintaining genome stability. The chain is 3'-5' exonuclease from Drosophila yakuba (Fruit fly).